A 270-amino-acid chain; its full sequence is Thiazole synthase (270 aa).

The active-site Schiff-base intermediate with DXP is Lys-112. 1-deoxy-D-xylulose 5-phosphate-binding positions include Gly-173, 199–200 (AG), and 221–222 (NS).

It belongs to the ThiG family. In terms of assembly, homotetramer. Forms heterodimers with either ThiH or ThiS.

The protein resides in the cytoplasm. The catalysed reaction is [ThiS sulfur-carrier protein]-C-terminal-Gly-aminoethanethioate + 2-iminoacetate + 1-deoxy-D-xylulose 5-phosphate = [ThiS sulfur-carrier protein]-C-terminal Gly-Gly + 2-[(2R,5Z)-2-carboxy-4-methylthiazol-5(2H)-ylidene]ethyl phosphate + 2 H2O + H(+). The protein operates within cofactor biosynthesis; thiamine diphosphate biosynthesis. Its function is as follows. Catalyzes the rearrangement of 1-deoxy-D-xylulose 5-phosphate (DXP) to produce the thiazole phosphate moiety of thiamine. Sulfur is provided by the thiocarboxylate moiety of the carrier protein ThiS. In vitro, sulfur can be provided by H(2)S. The protein is Thiazole synthase of Pseudomonas putida (strain ATCC 700007 / DSM 6899 / JCM 31910 / BCRC 17059 / LMG 24140 / F1).